The primary structure comprises 304 residues: Non-specific ribonucleoside hydrolase RihC (304 aa).

Histidine 235 is an active-site residue.

Belongs to the IUNH family. RihC subfamily.

Functionally, hydrolyzes both purine and pyrimidine ribonucleosides with a broad-substrate specificity. In Salmonella paratyphi A (strain ATCC 9150 / SARB42), this protein is Non-specific ribonucleoside hydrolase RihC.